Here is a 358-residue protein sequence, read N- to C-terminus: Nicotinate-nucleotide--dimethylbenzimidazole phosphoribosyltransferase (358 aa).

E323 acts as the Proton acceptor in catalysis.

It belongs to the CobT family.

It carries out the reaction 5,6-dimethylbenzimidazole + nicotinate beta-D-ribonucleotide = alpha-ribazole 5'-phosphate + nicotinate + H(+). It participates in nucleoside biosynthesis; alpha-ribazole biosynthesis; alpha-ribazole from 5,6-dimethylbenzimidazole: step 1/2. Catalyzes the synthesis of alpha-ribazole-5'-phosphate from nicotinate mononucleotide (NAMN) and 5,6-dimethylbenzimidazole (DMB). The protein is Nicotinate-nucleotide--dimethylbenzimidazole phosphoribosyltransferase of Oleidesulfovibrio alaskensis (strain ATCC BAA-1058 / DSM 17464 / G20) (Desulfovibrio alaskensis).